Consider the following 794-residue polypeptide: Histone-lysine N-methyltransferase, H3 lysine-9 specific SUVH5 (794 aa).

2 disordered regions span residues 187–210 (VGRD…KRSI) and 254–276 (SPVK…KNSE). The span at 194-203 (NMGSKFSKNG) shows a compositional bias: polar residues. Residues 258–276 (PSEKRNGDYGEGSMRKNSE) are compositionally biased toward basic and acidic residues. Residues 365-515 (GTVPGVEVGD…KLVFKFKLRR (151 aa)) form the YDG domain. The Pre-SET domain maps to 585-644 (KSCGCTNGCSKSKNCACIVKNGGKIPYYDGAIVEIKPLVYECGPHCKCPPSCNMRVSQHG). Residues 647-764 (IKLEIFKTES…PLQELSYDYN (118 aa)) form the SET domain. The region spanning 778–794 (KKKFCYCGSAECSGRLY) is the Post-SET domain.

It belongs to the class V-like SAM-binding methyltransferase superfamily. Histone-lysine methyltransferase family. Suvar3-9 subfamily. In terms of tissue distribution, expressed in leaves stems and flowers.

It localises to the nucleus. The protein localises to the chromosome. Its subcellular location is the centromere. It catalyses the reaction N(6)-methyl-L-lysyl(9)-[histone H3] + S-adenosyl-L-methionine = N(6),N(6)-dimethyl-L-lysyl(9)-[histone H3] + S-adenosyl-L-homocysteine + H(+). It carries out the reaction L-lysyl(9)-[histone H3] + S-adenosyl-L-methionine = N(6)-methyl-L-lysyl(9)-[histone H3] + S-adenosyl-L-homocysteine + H(+). Histone methyltransferase. Methylates 'Lys-9' of histone H3. H3 'Lys-9' methylation represents a specific tag for epigenetic transcriptional repression. This chain is Histone-lysine N-methyltransferase, H3 lysine-9 specific SUVH5 (SUVH5), found in Arabidopsis thaliana (Mouse-ear cress).